The sequence spans 309 residues: Malate dehydrogenase (309 aa).

Residues 10 to 15 (GAGNVG) and Asp34 contribute to the NAD(+) site. Positions 83 and 89 each coordinate substrate. NAD(+)-binding positions include Asn96 and 119–121 (VSN). Substrate-binding residues include Asn121 and Arg152. His176 (proton acceptor) is an active-site residue.

The protein belongs to the LDH/MDH superfamily. MDH type 3 family.

It carries out the reaction (S)-malate + NAD(+) = oxaloacetate + NADH + H(+). Its function is as follows. Catalyzes the reversible oxidation of malate to oxaloacetate. The protein is Malate dehydrogenase of Heliobacterium modesticaldum (strain ATCC 51547 / Ice1).